The sequence spans 374 residues: Chaperone protein DnaJ (374 aa).

The J domain maps to 5-70 (DFYEILGVGK…QKRDAYDRYG (66 aa)). A disordered region spans residues 29–50 (AMKHHPDRNPDSKGAEDKFKEA). The segment covering 35–50 (DRNPDSKGAEDKFKEA) has biased composition (basic and acidic residues). The segment at 134 to 212 (GYDTTIRVPS…CSGAGKIKRN (79 aa)) adopts a CR-type zinc-finger fold. Cysteine 147, cysteine 150, cysteine 164, cysteine 167, cysteine 186, cysteine 189, cysteine 200, and cysteine 203 together coordinate Zn(2+). 4 CXXCXGXG motif repeats span residues 147–154 (CETCDGSG), 164–171 (CTTCGGHG), 186–193 (CPKCHGSG), and 200–207 (CGTCSGAG).

Belongs to the DnaJ family. Homodimer. Zn(2+) is required as a cofactor.

The protein localises to the cytoplasm. Participates actively in the response to hyperosmotic and heat shock by preventing the aggregation of stress-denatured proteins and by disaggregating proteins, also in an autonomous, DnaK-independent fashion. Unfolded proteins bind initially to DnaJ; upon interaction with the DnaJ-bound protein, DnaK hydrolyzes its bound ATP, resulting in the formation of a stable complex. GrpE releases ADP from DnaK; ATP binding to DnaK triggers the release of the substrate protein, thus completing the reaction cycle. Several rounds of ATP-dependent interactions between DnaJ, DnaK and GrpE are required for fully efficient folding. Also involved, together with DnaK and GrpE, in the DNA replication of plasmids through activation of initiation proteins. In Janthinobacterium sp. (strain Marseille) (Minibacterium massiliensis), this protein is Chaperone protein DnaJ.